Here is a 92-residue protein sequence, read N- to C-terminus: Small ribosomal subunit protein uS19 (92 aa).

Belongs to the universal ribosomal protein uS19 family.

Protein S19 forms a complex with S13 that binds strongly to the 16S ribosomal RNA. The protein is Small ribosomal subunit protein uS19 of Borrelia hermsii (strain HS1 / DAH).